The primary structure comprises 600 residues: NADH-quinone oxidoreductase subunit C/D (600 aa).

Residues 1–190 (MVNNMTDLTA…DPFELTKAKQ (190 aa)) are NADH dehydrogenase I subunit C. The NADH dehydrogenase I subunit D stretch occupies residues 214–600 (DFMFLNLGPN…IDFVMSDVDR (387 aa)).

In the N-terminal section; belongs to the complex I 30 kDa subunit family. It in the C-terminal section; belongs to the complex I 49 kDa subunit family. As to quaternary structure, NDH-1 is composed of 13 different subunits. Subunits NuoB, CD, E, F, and G constitute the peripheral sector of the complex.

It localises to the cell inner membrane. The catalysed reaction is a quinone + NADH + 5 H(+)(in) = a quinol + NAD(+) + 4 H(+)(out). Functionally, NDH-1 shuttles electrons from NADH, via FMN and iron-sulfur (Fe-S) centers, to quinones in the respiratory chain. The immediate electron acceptor for the enzyme in this species is believed to be ubiquinone. Couples the redox reaction to proton translocation (for every two electrons transferred, four hydrogen ions are translocated across the cytoplasmic membrane), and thus conserves the redox energy in a proton gradient. This chain is NADH-quinone oxidoreductase subunit C/D, found in Salmonella paratyphi C (strain RKS4594).